A 333-amino-acid chain; its full sequence is Transcription initiation factor IIB (333 aa).

The TFIIB-type zinc-finger motif lies at 33-64 (EVYKCPICGNDKFVYNYERGEAVCIVCGAVVQ). 4 residues coordinate Zn(2+): C37, C40, C56, and C59. 2 tandem repeats follow at residues 149–232 (QELE…LREL) and 243–324 (LYIS…ELAK).

This sequence belongs to the TFIIB family.

Its function is as follows. Stabilizes TBP binding to an archaeal box-A promoter. Also responsible for recruiting RNA polymerase II to the pre-initiation complex (DNA-TBP-TFIIB). In Pyrobaculum aerophilum (strain ATCC 51768 / DSM 7523 / JCM 9630 / CIP 104966 / NBRC 100827 / IM2), this protein is Transcription initiation factor IIB.